Reading from the N-terminus, the 226-residue chain is Cytidylate kinase (226 aa).

Gly10–Thr18 contributes to the ATP binding site.

This sequence belongs to the cytidylate kinase family. Type 1 subfamily.

The protein resides in the cytoplasm. It carries out the reaction CMP + ATP = CDP + ADP. The enzyme catalyses dCMP + ATP = dCDP + ADP. This chain is Cytidylate kinase, found in Streptococcus thermophilus (strain CNRZ 1066).